Here is a 1006-residue protein sequence, read N- to C-terminus: Beta-galactosidase (1006 aa).

Positions 1-19 (MKLSSACAIALLAAQAAGA) are cleaved as a signal peptide. Residue asparagine 156 is glycosylated (N-linked (GlcNAc...) asparagine). The Proton donor role is filled by glutamate 200. Glutamate 298 acts as the Nucleophile in catalysis. Residues asparagine 373, asparagine 402, asparagine 422, asparagine 478, asparagine 522, asparagine 622, asparagine 739, asparagine 760, asparagine 777, and asparagine 805 are each glycosylated (N-linked (GlcNAc...) asparagine).

It belongs to the glycosyl hydrolase 35 family.

It carries out the reaction Hydrolysis of terminal non-reducing beta-D-galactose residues in beta-D-galactosides.. Cleaves beta-linked terminal galactosyl residues from gangliosides, glycoproteins, and glycosaminoglycans. The polypeptide is Beta-galactosidase (lacA) (Aspergillus niger).